The chain runs to 403 residues: Aurora kinase A (403 aa).

Residues 1-125 (MDRSKENCIS…SKQKNEESKK (125 aa)) are disordered. 2 stretches are compositionally biased toward polar residues: residues 27–83 (VTQQ…QATS) and 91–101 (PLNNTQKSKQP). A phosphoserine mark is found at serine 41 and serine 51. A compositionally biased stretch (basic and acidic residues) spans 114 to 125 (LASKQKNEESKK). A Protein kinase domain is found at 133–383 (FEIGRPLGKG…LREVLEHPWI (251 aa)). ATP contacts are provided by residues lysine 143, lysine 162, and 211 to 213 (EYA). The Proton acceptor role is filled by aspartate 256. Lysine 258 participates in a covalent cross-link: Glycyl lysine isopeptide (Lys-Gly) (interchain with G-Cter in SUMO2). ATP is bound by residues 260-261 (EN) and aspartate 274. The interval 280–293 (HAPSSRRTTLCGTL) is activation segment. Residues threonine 287 and threonine 288 each carry the phosphothreonine modification. Phosphoserine; by PKA and PAK is present on serine 342.

This sequence belongs to the protein kinase superfamily. Ser/Thr protein kinase family. Aurora subfamily. As to quaternary structure, part of a complex composed of NEDD9, AURKA and CTTN; within the complex NEDD9 acts as a scaffold protein and is required for complex formation. Identified in a complex with AUNIP and NIN. Interacts with FBXL7. Interacts with CPEB1, JTB, TACC1, TPX2, PPP2CA, as well as with the protein phosphatase type 1 (PP1) isoforms PPP1CA, PPP1CB and PPP1CC. Also interacts with its substrates ARHGEF2, BORA, KIF2A, PARD3, and p53/TP53. Interaction with BORA promotes phosphorylation of PLK1. Interacts with CIMAP3. Interacts with GADD45A, competing with its oligomerization. Interacts (via C-terminus) with AUNIP (via C-terminus). Interacts with FRY; this interaction facilitates AURKA-mediated PLK1 phosphorylation. Interacts with SIRT2. Interacts with MYCN; interaction is phospho-independent and triggers AURKA activation; AURKA competes with FBXW7 for binding to unphosphorylated MYCN but not for binding to phosphorylated MYCN. Interacts with HNRNPU. Interacts with AAAS. Interacts with KLHL18 and CUL3. Interacts with FOXP1. Interacts with HDAC6; AURKA-mediated phosphorylation of HDAC6 promotes deacetylation of alpha-tubulin. In terms of processing, activated by phosphorylation at Thr-288; this brings about a change in the conformation of the activation segment. Phosphorylation at Thr-288 varies during the cell cycle and is highest during M phase. Autophosphorylated at Thr-288 upon TPX2 binding. Thr-288 can be phosphorylated by several kinases, including PAK and PKA. Protein phosphatase type 1 (PP1) binds AURKA and inhibits its activity by dephosphorylating Thr-288 during mitosis. Phosphorylation at Ser-342 decreases the kinase activity. PPP2CA controls degradation by dephosphorylating Ser-51 at the end of mitosis. Post-translationally, ubiquitinated by the E3 ubiquitin-protein ligase complex SCF(FBXL7) during mitosis, leading to its degradation by the proteasome. Ubiquitinated by CHFR, leading to its degradation by the proteasome. Ubiquitinated by the anaphase-promoting complex (APC), leading to its degradation by the proteasome. Ubiquitinated by the CUL3-KLHL18 ligase leading to its activation at the centrosome which is required for initiating mitotic entry. Ubiquitination mediated by CUL3-KLHL18 ligase does not lead to its degradation by the proteasome. In terms of tissue distribution, highly expressed in testis and weakly in skeletal muscle, thymus and spleen. Also highly expressed in colon, ovarian, prostate, neuroblastoma, breast and cervical cancer cell lines.

Its subcellular location is the cytoplasm. The protein resides in the cytoskeleton. It is found in the microtubule organizing center. The protein localises to the centrosome. It localises to the spindle pole. Its subcellular location is the centriole. The protein resides in the cell projection. It is found in the neuron projection. The protein localises to the cilium. It localises to the cilium basal body. Its subcellular location is the basolateral cell membrane. The catalysed reaction is L-seryl-[protein] + ATP = O-phospho-L-seryl-[protein] + ADP + H(+). The enzyme catalyses L-threonyl-[protein] + ATP = O-phospho-L-threonyl-[protein] + ADP + H(+). With respect to regulation, activation of CDK1, appears to be an upstream event of AURKA activation. Phosphatase inhibitor-2 (PPP1R2) and TPX2 act also as activators. Inactivated by the G2 checkpoint. Inhibited by GADD45A and p53/TP53, and through dephosphorylation by protein phosphatase type 1 (PP1). MLN8054 is also a potent and selective inhibitor. Activated during the early phase of cilia disassembly in the presence of CIMAP3. Inhibited by the small molecule inhibitor VX-680. In terms of biological role, mitotic serine/threonine kinase that contributes to the regulation of cell cycle progression. Associates with the centrosome and the spindle microtubules during mitosis and plays a critical role in various mitotic events including the establishment of mitotic spindle, centrosome duplication, centrosome separation as well as maturation, chromosomal alignment, spindle assembly checkpoint, and cytokinesis. Required for normal spindle positioning during mitosis and for the localization of NUMA1 and DCTN1 to the cell cortex during metaphase. Required for initial activation of CDK1 at centrosomes. Phosphorylates numerous target proteins, including ARHGEF2, BORA, BRCA1, CDC25B, DLGP5, HDAC6, KIF2A, LATS2, NDEL1, PARD3, PPP1R2, PLK1, RASSF1, TACC3, p53/TP53 and TPX2. Phosphorylates MCRS1 which is required for MCRS1-mediated kinetochore fiber assembly and mitotic progression. Regulates KIF2A tubulin depolymerase activity. Important for microtubule formation and/or stabilization. Required for normal axon formation. Plays a role in microtubule remodeling during neurite extension. Also acts as a key regulatory component of the p53/TP53 pathway, and particularly the checkpoint-response pathways critical for oncogenic transformation of cells, by phosphorylating and destabilizing p53/TP53. Phosphorylates its own inhibitors, the protein phosphatase type 1 (PP1) isoforms, to inhibit their activity. Inhibits cilia outgrowth. Required for cilia disassembly via phosphorylation of HDAC6 and subsequent deacetylation of alpha-tubulin. Regulates protein levels of the anti-apoptosis protein BIRC5 by suppressing the expression of the SCF(FBXL7) E3 ubiquitin-protein ligase substrate adapter FBXL7 through the phosphorylation of the transcription factor FOXP1. This chain is Aurora kinase A, found in Homo sapiens (Human).